We begin with the raw amino-acid sequence, 694 residues long: MSDQEFDLSKIRNIGIMAHIDAGKTTTTERILYYAGRTHKIGEVHEGGATMDWMEQEQERGITITSAATTVFWLDCKINIIDTPGHVDFTIEVERSLRVLDGAVAVFDAVSGVEPQSETVWRQANKYGVPRIAFVNKMDRMGANYFAAVESMKEKLGANAIPVHCPIGAESQFVGMVDLISQKALYFLDETLGAKWEEREIPEDLKEKCAELRYALLEELATVDEGNEAFMMKVLEDPDSITEEEIHQVMRKGVIENKINPVLCGTAFKNKGVQQLLNVIVKWLPSPKDRGIIHGINLKNNEEVHLEPRKDGPLAALAFKIMTDPYVGRITFIRIYSGTLKKGSAILNSTKDKKERISRLLEMHANERTDRDEFTVGDIGACVGLKYSVTGDTLCDDNQEIVLERIEIPEPVIDMAIEPKSKGDREKLAQALNALSEEDPTFRVTSNEETGQTIISGMGELHLDILRDRMIREFKVEANVGKPQVSYKETITKNGSSETKYVKQSGGRGQYAHVCLEIEPNEPGKGNEVVSKIVGGVIPREYIPAVMKGVEEGLNTGVLAGYGLVDVKVSIVFGSYHEVDSSEMAFKICGSMAVKEACRKAAPVILEPIMKVAVTTPEDHLGDVIGDLNRRRGKILGQESSRSMAQVNAEVPLSEMFGYTTSLRSLTSGRATSTMEPAFFAKVPQKIQEEIVKK.

Residues 9–288 (SKIRNIGIMA…VIVKWLPSPK (280 aa)) form the tr-type G domain. GTP contacts are provided by residues 18–25 (AHIDAGKT), 82–86 (DTPGH), and 136–139 (NKMD).

Belongs to the TRAFAC class translation factor GTPase superfamily. Classic translation factor GTPase family. EF-G/EF-2 subfamily.

The protein resides in the cytoplasm. Functionally, catalyzes the GTP-dependent ribosomal translocation step during translation elongation. During this step, the ribosome changes from the pre-translocational (PRE) to the post-translocational (POST) state as the newly formed A-site-bound peptidyl-tRNA and P-site-bound deacylated tRNA move to the P and E sites, respectively. Catalyzes the coordinated movement of the two tRNA molecules, the mRNA and conformational changes in the ribosome. This Chlamydia caviae (strain ATCC VR-813 / DSM 19441 / 03DC25 / GPIC) (Chlamydophila caviae) protein is Elongation factor G.